A 454-amino-acid chain; its full sequence is Notoamide biosynthesis cluster protein M' (454 aa).

Residues Asn-51 and Asn-74 are each glycosylated (N-linked (GlcNAc...) asparagine). Positions 205-219 (KARSKEKKPKRKKSK) are enriched in basic residues. The tract at residues 205–224 (KARSKEKKPKRKKSKAEKEH) is disordered. 2 helical membrane-spanning segments follow: residues 334-354 (MTTV…SGLF) and 375-395 (FWMY…VWGV).

The protein resides in the membrane. In terms of biological role, part of the gene cluster that mediates the biosynthesis of notoamide, a fungal indole alkaloid that belongs to a family of natural products containing a characteristic bicyclo[2.2.2]diazaoctane core. The first step of notoamide biosynthesis involves coupling of L-proline and L-tryptophan by the bimodular NRPS notE', to produce cyclo-L-tryptophan-L-proline called brevianamide F. The reverse prenyltransferase notF' then acts as a deoxybrevianamide E synthase and converts brevianamide F to deoxybrevianamide E via reverse prenylation at C-2 of the indole ring leading to the bicyclo[2.2.2]diazaoctane core. Deoxybrevianamide E is further hydroxylated at C-6 of the indole ring, likely catalyzed by the cytochrome P450 monooxygenase notG', to yield 6-hydroxy-deoxybrevianamide E. 6-hydroxy-deoxybrevianamide E is a specific substrate of the prenyltransferase notC' for normal prenylation at C-7 to produce 6-hydroxy-7-prenyl-deoxybrevianamide, also called notoamide S. As the proposed pivotal branching point in notoamide biosynthesis, notoamide S can be diverted to notoamide E through an oxidative pyran ring closure putatively catalyzed by either notH' cytochrome P450 monooxygenase or the notD' FAD-linked oxidoreductase. This step would be followed by an indole 2,3-epoxidation-initiated pinacol-like rearrangement catalyzed by the notB' FAD-dependent monooxygenase leading to the formation of notoamide C and notoamide D. On the other hand notoamide S is converted to notoamide T by notH' (or notD'), a bifunctional oxidase that also functions as the intramolecular Diels-Alderase responsible for generation of (-)-notoamide T. To generate antipodal (+)-notoaminide T, notH (or notD) in Aspergillus strain MF297-2 is expected to catalyze a Diels-Alder reaction leading to the opposite stereochemistry. The remaining oxidoreductase notD' (or notH') likely catalyzes the oxidative pyran ring formation to yield (-)-stephacidin A. The FAD-dependent monooxygenase notI' is highly similar to notB' and is predicted to catalyze a similar conversion from (-)-stephacidin A to (+)-notoamide B via the 2,3-epoxidation of (-)-stephacidin A followed by a pinacol-type rearrangement. Finally, it remains unclear which enzyme could be responsible for the final hydroxylation steps leading to notoamide A and sclerotiamide. The function of notM' in the notoamide biosynthesis has not been determined yet. In Aspergillus versicolor, this protein is Notoamide biosynthesis cluster protein M'.